The following is a 706-amino-acid chain: uncharacterized protein (706 aa).

Coiled-coil stretches lie at residues 86–162 (TKNV…AKKI), 269–299 (DYLKDVEKSIEQLSDNYEQYLSNIDIFVNEL), and 337–427 (DDYI…QSDY).

This is an uncharacterized protein from Staphylococcus aureus (strain MRSA252).